The following is an 861-amino-acid chain: MSTAEFAQLLENSILSPDQNIRLTSETQLKKLSNDNFLQFAGLSSQVLIDENTKLEGRILAALTLKNELVSKDSVKTQQFAQRWITQVSPEAKNQIKTNALTALVSIEPRIANAAAQLIAAIADIELPHGAWPELMKIMVDNTGAEQPENVKRASLLALGYMCESADPQSQALVSSSNNILIAIVQGAQSTETSKAVRLAALNALADSLIFIKNNMEREGERNYLMQVVCEATQAEDIEVQAAAFGCLCKIMSLYYTFMKPYMEQALYALTIATMKSPNDKVASMTVEFWSTICEEEIDIAYELAQFPQSPLQSYNFALSSIKDVVPNLLNLLTRQNEDPEDDDWNVSMSAGACLQLFAQNCGNHILEPVLEFVEQNITADNWRNREAAVMAFGSIMDGPDKVQRTYYVHQALPSILNLMNDQSLQVKETTAWCIGRIADSVAESIDPQQHLPGVVQACLIGLQDHPKVATNCSWTIINLVEQLAEATPSPIYNFYPALVDGLIGAANRIDNEFNARASAFSALTTMVEYATDTVAETSASISTFVMDKLGQTMSVDENQLTLEDAQSLQELQSNILTVLAAVIRKSPSSVEPVADMLMGLFFRLLEKKDSAFIEDDVFYAISALAASLGKGFEKYLETFSPYLLKALNQVDSPVSITAVGFIADISNSLEEDFRRYSDAMMNVLAQMISNPNARRELKPAVLSVFGDIASNIGADFIPYLNDIMALCVAAQNTKPENGTLEALDYQIKVLEAVLDAYVGIVAGLHDKPEALFPYVGTIFQFIAQVAEDPQLYSEDATSRAAVGLIGDIAAMFPDGSIKQFYGQDWVIDYIKRTRSGQLFSQATKDTARWAREQQKRQLSL.

The residue at position 2 (serine 2) is an N-acetylserine. HEAT repeat units follow at residues 3 to 35, 37 to 66, 90 to 129, 134 to 164, 177 to 208, 219 to 255, 260 to 306, 317 to 362, 367 to 395, 402 to 442, 452 to 484, 496 to 530, 536 to 586, 592 to 629, 634 to 669, 675 to 713, 718 to 764, 773 to 812, and 819 to 859; these read TAEF…LSND, FLQF…LTLK, PEAK…ELPH, ELMK…YMCE, SNNI…LADS, EGER…MSLY, KPYM…ELAQ, FALS…AQNC, LEPV…AFGS, KVQR…ADSV, LPGV…VEQL, YPAL…MVEY, AETS…VIRK, EPVA…AASL, EKYL…ISNS, RRYS…ASNI, IPYL…IVAG, FPYV…IAAM, and KQFY…KRQL. An Importin N-terminal domain is found at 25–106; that stretch reads SETQLKKLSN…KTNALTALVS (82 aa). At serine 836 the chain carries Phosphoserine.

The protein belongs to the importin beta family. Importin beta-1 subfamily. Forms a complex with the importin alpha subunit (SRP1/KAP60). Interacts with Ran (GSP1); interacts specifically with the GTP-bound form of Ran (GTP-Ran), protecting it from GTP hydrolysis and nucleotide exchange. Interacts with nucleoporin NUP1.

The protein localises to the cytoplasm. It is found in the nucleus. It localises to the nuclear pore complex. Importin beta subunit that functions in nuclear protein import through association with the importin alpha subunit, which binds to the classical nuclear localization signal (cNLS) in cargo substrates. Docking of the importin/substrate complex to the nuclear pore complex (NPC) is mediated by importin beta through binding to nucleoporin FxFG repeats and the complex is subsequently translocated through the pore by an energy requiring, Ran-dependent mechanism. At the nucleoplasmic side of the NPC, GTP-Ran binds to importin beta and the three components separate, leading to release of the cargo. Importin alpha and beta are re-exported from the nucleus to the cytoplasm where GTP hydrolysis releases Ran from importin beta. The directionality of nuclear import is thought to be conferred by an asymmetric distribution of the GTP- and GDP-bound forms of Ran between the cytoplasm and nucleus. Mediates the nuclear import of histones H2A and H2B. Mediates the nuclear import of transcription factor GCN4. This Saccharomyces cerevisiae (strain ATCC 204508 / S288c) (Baker's yeast) protein is Importin subunit beta-1.